A 116-amino-acid polypeptide reads, in one-letter code: DGIDYAAVTVQLPGGERGGSTGYDNAVALPAGGRGSSMLDPKELGQMNIVFEGVSKSYHDAVALVLPSLKASTYYEESLYKVINTWADIINRALTEAVAAEAAAAEDPEMETMYTK.

It belongs to the PsbO family.

It localises to the plastid. The protein localises to the chloroplast thylakoid membrane. Functionally, stabilizes the manganese cluster which is the primary site of water splitting. In Pinus strobus (Eastern white pine), this protein is Putative oxygen-evolving enhancer protein 1.